The primary structure comprises 427 residues: UPF0597 protein CPR_0790 (427 aa).

It belongs to the UPF0597 family.

The protein is UPF0597 protein CPR_0790 of Clostridium perfringens (strain SM101 / Type A).